The following is a 173-amino-acid chain: Protein-export protein SecB (173 aa).

Belongs to the SecB family. Homotetramer, a dimer of dimers. One homotetramer interacts with 1 SecA dimer.

It is found in the cytoplasm. Its function is as follows. One of the proteins required for the normal export of preproteins out of the cell cytoplasm. It is a molecular chaperone that binds to a subset of precursor proteins, maintaining them in a translocation-competent state. It also specifically binds to its receptor SecA. The chain is Protein-export protein SecB from Ralstonia nicotianae (strain ATCC BAA-1114 / GMI1000) (Ralstonia solanacearum).